The chain runs to 144 residues: Large ribosomal subunit protein uL15 (144 aa).

The interval 1–49 (MRLNTLSPAAGAKSAAKRVGRGIGSGTGKTCGRGHKGQKSRSGGGVRVG) is disordered. Over residues 21 to 31 (RGIGSGTGKTC) the composition is skewed to gly residues.

It belongs to the universal ribosomal protein uL15 family. Part of the 50S ribosomal subunit.

Functionally, binds to the 23S rRNA. This Shewanella halifaxensis (strain HAW-EB4) protein is Large ribosomal subunit protein uL15.